The following is a 358-amino-acid chain: MARALLFSLVFLAILLPALAACPQNCHCHGDLQHVICDKVGLQKIPKVSETTKLLNLQRNNFPVLAANSFRTMPNLVSLHLQHCNIREVAAGAFRGLKQLIYLYLSHNDIRVLRAGAFDDLTELTYLYLDHNKVSELPRGLLSPLVNLFILQLNNNKIRELRAGAFQGAKDLRWLYLSENALSSLQPGSLDDVENLAKFHLDKNQLSSYPSAALSKLRVVEELKLSHNPLKSIPDNAFQSFGRYLETLWLDNTNLEKFSDAAFSGVTTLKHVHLDNNRLNQLPSSFPFDNLETLTLTNNPWKCTCQLRGLRRWLEAKASRPDATCSSPAKFKGQRIRDTDALRSCKSPTKRSKKAGRH.

The N-terminal stretch at 1–20 (MARALLFSLVFLAILLPALA) is a signal peptide. Positions 21 to 50 (ACPQNCHCHGDLQHVICDKVGLQKIPKVSE) constitute an LRRNT domain. A disulfide bond links C22 and C37. LRR repeat units follow at residues 51–72 (TTKLLNLQRNNFPVLAANSFRT), 75–96 (NLVSLHLQHCNIREVAAGAFRG), 99–120 (QLIYLYLSHNDIRVLRAGAFDD), 123–144 (ELTYLYLDHNKVSELPRGLLSP), 147–168 (NLFILQLNNNKIRELRAGAFQG), 171–192 (DLRWLYLSENALSSLQPGSLDD), 195–216 (NLAKFHLDKNQLSSYPSAALSK), 219–240 (VVEELKLSHNPLKSIPDNAFQS), 244–265 (YLETLWLDNTNLEKFSDAAFSG), and 268–289 (TLKHVHLDNNRLNQLPSSFPFD). O-linked (GalNAc...) serine glycosylation occurs at S143. An LRRCT domain is found at 299 to 347 (NPWKCTCQLRGLRRWLEAKASRPDATCSSPAKFKGQRIRDTDALRSCKS). 2 disulfides stabilise this stretch: C303–C345 and C305–C325. The interval 322–358 (DATCSSPAKFKGQRIRDTDALRSCKSPTKRSKKAGRH) is disordered. The segment covering 348-358 (PTKRSKKAGRH) has biased composition (basic residues).

This sequence belongs to the small leucine-rich proteoglycan (SLRP) family. SLRP class IV subfamily. Mostly monomeric. Interacts with collagen type II. In terms of tissue distribution, cartilage.

It is found in the secreted. Its subcellular location is the extracellular space. The protein localises to the extracellular matrix. In terms of biological role, promotes attachment of chondrocytes, fibroblasts, and osteoblasts. This binding is mediated (at least for chondrocytes and fibroblasts) by the integrin alpha(2)beta(1). May play an important role in the regulation of chondrocyte growth and proliferation. The polypeptide is Chondroadherin (Chad) (Mus musculus (Mouse)).